Here is a 329-residue protein sequence, read N- to C-terminus: Peroxidase 30 (329 aa).

Positions 1-27 are cleaved as a signal peptide; it reads MKTMTQLNIAVVVVVTVLIGMLRSSEA. Cystine bridges form between cysteine 38–cysteine 116, cysteine 71–cysteine 76, cysteine 122–cysteine 324, and cysteine 201–cysteine 234. The active-site Proton acceptor is the histidine 69. Positions 70, 73, 75, 77, and 79 each coordinate Ca(2+). Residues asparagine 83 and asparagine 155 are each glycosylated (N-linked (GlcNAc...) asparagine). The segment at 141 to 165 is disordered; sequence SWSVPTGRRDGRISNKTEATNNIPP. The span at 156 to 165 shows a compositional bias: polar residues; it reads KTEATNNIPP. Residue proline 164 coordinates substrate. An N-linked (GlcNAc...) asparagine glycan is attached at asparagine 169. Histidine 194 lines the heme b pocket. Threonine 195 contributes to the Ca(2+) binding site. Residues asparagine 210 and asparagine 240 are each glycosylated (N-linked (GlcNAc...) asparagine). Positions 247, 250, and 255 each coordinate Ca(2+). N-linked (GlcNAc...) asparagine glycosylation occurs at asparagine 290.

The protein belongs to the peroxidase family. Classical plant (class III) peroxidase subfamily. Requires heme b as cofactor. Ca(2+) is required as a cofactor. Mainly expressed in roots.

It is found in the secreted. It carries out the reaction 2 a phenolic donor + H2O2 = 2 a phenolic radical donor + 2 H2O. Its function is as follows. Removal of H(2)O(2), oxidation of toxic reductants, biosynthesis and degradation of lignin, suberization, auxin catabolism, response to environmental stresses such as wounding, pathogen attack and oxidative stress. These functions might be dependent on each isozyme/isoform in each plant tissue. In Arabidopsis thaliana (Mouse-ear cress), this protein is Peroxidase 30 (PER30).